Here is a 141-residue protein sequence, read N- to C-terminus: Large ribosomal subunit protein uL16 (141 aa).

It belongs to the universal ribosomal protein uL16 family. In terms of assembly, part of the 50S ribosomal subunit.

Its function is as follows. Binds 23S rRNA and is also seen to make contacts with the A and possibly P site tRNAs. The chain is Large ribosomal subunit protein uL16 from Campylobacter lari (strain RM2100 / D67 / ATCC BAA-1060).